Reading from the N-terminus, the 157-residue chain is N5-carboxyaminoimidazole ribonucleotide mutase (157 aa).

Ser-8, Asp-11, and Arg-38 together coordinate substrate.

Belongs to the AIR carboxylase family. Class I subfamily.

The catalysed reaction is 5-carboxyamino-1-(5-phospho-D-ribosyl)imidazole + H(+) = 5-amino-1-(5-phospho-D-ribosyl)imidazole-4-carboxylate. It participates in purine metabolism; IMP biosynthesis via de novo pathway; 5-amino-1-(5-phospho-D-ribosyl)imidazole-4-carboxylate from 5-amino-1-(5-phospho-D-ribosyl)imidazole (N5-CAIR route): step 2/2. Its function is as follows. Catalyzes the conversion of N5-carboxyaminoimidazole ribonucleotide (N5-CAIR) to 4-carboxy-5-aminoimidazole ribonucleotide (CAIR). The polypeptide is N5-carboxyaminoimidazole ribonucleotide mutase (Methanocaldococcus jannaschii (strain ATCC 43067 / DSM 2661 / JAL-1 / JCM 10045 / NBRC 100440) (Methanococcus jannaschii)).